The following is a 201-amino-acid chain: MQTSPLLTQLMEALRCLPGVGPKSAQRMAFTLLQRDRSGGMRLAQALTRAMSEIGHCADCRTFTEQDVCNICSNPRRQENGQICVVESPADIYAIEQTGQFSGRYFVLMGHLSPLDGIGPDDIGLDRLEQRLASEKISELILATNPTVEGEATANYIAELCAEAGVEASRIAHGVPVGGELEMVDGTTLSHSLAGRHKIIF.

The segment at cysteine 57–cysteine 72 adopts a C4-type zinc-finger fold. Positions glycine 81–proline 176 constitute a Toprim domain.

It belongs to the RecR family.

In terms of biological role, may play a role in DNA repair. It seems to be involved in an RecBC-independent recombinational process of DNA repair. It may act with RecF and RecO. The chain is Recombination protein RecR from Salmonella agona (strain SL483).